The sequence spans 1138 residues: MARYTQRPENALKRANEFIEVGKPLRALDTLQEVFRNKRWNYAYSETVIEPLMFKYLYLCVELKKSHIAKEGLFQYRNMFQLVNVNSLENVIRGYLKMAEEHTEAAQAQSSAAVAVLELDDLDNIATPESILMSAVCGEDAQDRSDRTILLPWVKFLWESYCQCLELLRVNTHCEALYHDIARMAFQFCLKYNRKSEFRRLCDKLRKHLEDICKSSNQTTGVSINKVETQQLCLDTRLYLLDSAIQMELWQEAYKAIEDIHGLMAMSKKTPVPKTMANYYQKLAMVFSKAGNQLFHAAALLKLFQLTRELKKNLTKDDLQRMAAHVLLATLSIPLPSAHPEFDRFIEADKSPLEKAQKLAVLLGLPQPPTRVSLIREVVRLNVPNLVSDEFRNLYNWLEVDFNPLNLCKRIQSIVDTIESSETENTLLTPYIQSLKDVTIMRLIRQISQVYESIEFKRLLELAPFCNIFELEKLLVESVRHNDMQIRIDHQRNSIYFGTDLTESQREYRPDGPTLQSMPSEQIRSQLVNMSTVLTRAVSIVYPNRERDQRAKLRTQMVQHYHEIKDREHQRILQRQKIIEDRKEFIEKQNNAREEEEARRHEEESRKAKLAEQKRLEQEQEERERKRHENEIQAIKEKSLKEKVQQISQTAHGKKMLSKLDEEGIKKLDAEQIAMRESEELQRERKELQSKLKSQEKKIDYFERAKRIEEIPLFEKYLAEKNVKDKEFWEATEQTRIENAIAERKDAVSQQDRLKRMYPDRDEYLEALKKERASLYVEKLKKFDIALAEERKKRLADRVVRRREERRQAYLRAKEEERFRKEEEIRHAREAEERAAAEARRLEREAEDEKRRQQYEKQRAKEEEAERKIQEDRERLAREVAVERERSEKERDVWRPRADRVERPSAAPAGGASEWRRNAPPTDRNERTDRGDRNDRNDRNDRNDRNDRNDRNDRNDRPERAERKENDGGADSSWRVRREPESQRGTGAGMDRSERGGGGAPSGRDDKWRRGGDRSERLGGDRDRDSFRRNDGPRRDDDRGGFRRDDQPQRETGSNWRDSPRQNDRDNRRTTGERRDVRGAGPKEGGGGVSGGGAGGGGGNWRTAPSPREEKAPPKREQAQDKENKAGDDGEWTSVKRR.

Positions Leu319–Thr502 constitute a PCI domain. Disordered stretches follow at residues Asn590–Gln633 and Glu817–Arg1138. 4 stretches are compositionally biased toward basic and acidic residues: residues Glu817 to Arg903, Asp923 to Asp967, Gly1003 to Gln1049, and Asp1058 to Arg1078. Gly residues predominate over residues Pro1082 to Asn1100. Residues Pro1107–Asp1128 show a composition bias toward basic and acidic residues.

Belongs to the eIF-3 subunit A family. Component of the eukaryotic translation initiation factor 3 (eIF-3) complex. The eIF-3 complex interacts with pix.

The protein localises to the cytoplasm. Functionally, RNA-binding component of the eukaryotic translation initiation factor 3 (eIF-3) complex, which is involved in protein synthesis of a specialized repertoire of mRNAs and, together with other initiation factors, stimulates binding of mRNA and methionyl-tRNAi to the 40S ribosome. The eIF-3 complex specifically targets and initiates translation of a subset of mRNAs involved in cell proliferation. The sequence is that of Eukaryotic translation initiation factor 3 subunit A from Drosophila virilis (Fruit fly).